Here is a 714-residue protein sequence, read N- to C-terminus: Phosphoribosylformylglycinamidine synthase subunit PurL (714 aa).

His-34 is an active-site residue. Tyr-37 lines the ATP pocket. Glu-78 provides a ligand contact to Mg(2+). Residues 79–82 (SHNH) and Arg-101 contribute to the substrate site. His-80 functions as the Proton acceptor in the catalytic mechanism. Residue Asp-102 participates in Mg(2+) binding. A substrate-binding site is contributed by Gln-226. A Mg(2+)-binding site is contributed by Asp-254. Residue 298-300 (ESQ) coordinates substrate. ATP-binding residues include Asp-474 and Gly-511. Asn-512 is a binding site for Mg(2+). Ser-514 provides a ligand contact to substrate.

This sequence belongs to the FGAMS family. As to quaternary structure, monomer. Part of the FGAM synthase complex composed of 1 PurL, 1 PurQ and 2 PurS subunits.

The protein localises to the cytoplasm. It carries out the reaction N(2)-formyl-N(1)-(5-phospho-beta-D-ribosyl)glycinamide + L-glutamine + ATP + H2O = 2-formamido-N(1)-(5-O-phospho-beta-D-ribosyl)acetamidine + L-glutamate + ADP + phosphate + H(+). Its pathway is purine metabolism; IMP biosynthesis via de novo pathway; 5-amino-1-(5-phospho-D-ribosyl)imidazole from N(2)-formyl-N(1)-(5-phospho-D-ribosyl)glycinamide: step 1/2. Functionally, part of the phosphoribosylformylglycinamidine synthase complex involved in the purines biosynthetic pathway. Catalyzes the ATP-dependent conversion of formylglycinamide ribonucleotide (FGAR) and glutamine to yield formylglycinamidine ribonucleotide (FGAM) and glutamate. The FGAM synthase complex is composed of three subunits. PurQ produces an ammonia molecule by converting glutamine to glutamate. PurL transfers the ammonia molecule to FGAR to form FGAM in an ATP-dependent manner. PurS interacts with PurQ and PurL and is thought to assist in the transfer of the ammonia molecule from PurQ to PurL. The protein is Phosphoribosylformylglycinamidine synthase subunit PurL of Methanothermobacter thermautotrophicus (strain ATCC 29096 / DSM 1053 / JCM 10044 / NBRC 100330 / Delta H) (Methanobacterium thermoautotrophicum).